The chain runs to 165 residues: Large ribosomal subunit protein uL11 (165 aa).

Belongs to the universal ribosomal protein uL11 family.

Functionally, binds directly to 26S ribosomal RNA. The chain is Large ribosomal subunit protein uL11 (rpl-12) from Caenorhabditis briggsae.